The chain runs to 501 residues: Glycerol kinase (501 aa).

Residue Thr-12 participates in ADP binding. ATP-binding residues include Thr-12, Thr-13, and Ser-14. Sn-glycerol 3-phosphate is bound at residue Thr-12. Residue Arg-16 participates in ADP binding. Sn-glycerol 3-phosphate is bound by residues Arg-82, Glu-83, Tyr-135, and Asp-244. Glycerol is bound by residues Arg-82, Glu-83, Tyr-135, Asp-244, and Gln-245. 4 residues coordinate ADP: Thr-266, Gly-309, Gly-409, and Asn-413. ATP contacts are provided by Thr-266, Gly-309, and Gly-409.

It belongs to the FGGY kinase family.

It carries out the reaction glycerol + ATP = sn-glycerol 3-phosphate + ADP + H(+). It participates in polyol metabolism; glycerol degradation via glycerol kinase pathway; sn-glycerol 3-phosphate from glycerol: step 1/1. Inhibited by fructose 1,6-bisphosphate (FBP). Functionally, key enzyme in the regulation of glycerol uptake and metabolism. Catalyzes the phosphorylation of glycerol to yield sn-glycerol 3-phosphate. The sequence is that of Glycerol kinase from Coxiella burnetii (strain Dugway 5J108-111).